Consider the following 106-residue polypeptide: ATP-dependent Clp protease adapter protein ClpS (106 aa).

It belongs to the ClpS family. As to quaternary structure, binds to the N-terminal domain of the chaperone ClpA.

Functionally, involved in the modulation of the specificity of the ClpAP-mediated ATP-dependent protein degradation. The chain is ATP-dependent Clp protease adapter protein ClpS from Photobacterium profundum (strain SS9).